The chain runs to 155 residues: Cytochrome c-type biogenesis protein CcmE (155 aa).

Over 1 to 7 (MTRKQKR) the chain is Cytoplasmic. The helical; Signal-anchor for type II membrane protein transmembrane segment at 8-28 (LVVIAGGMSFILAAVLLVMFA) threads the bilayer. The Periplasmic segment spans residues 29–155 (FSQSVAYFYM…GKGQEAKATP (127 aa)). Heme contacts are provided by His124 and Tyr128.

This sequence belongs to the CcmE/CycJ family.

It localises to the cell inner membrane. In terms of biological role, heme chaperone required for the biogenesis of c-type cytochromes. Transiently binds heme delivered by CcmC and transfers the heme to apo-cytochromes in a process facilitated by CcmF and CcmH. The chain is Cytochrome c-type biogenesis protein CcmE from Rhizobium etli (strain ATCC 51251 / DSM 11541 / JCM 21823 / NBRC 15573 / CFN 42).